We begin with the raw amino-acid sequence, 627 residues long: MAFVSIAPLASRCCVHKSFVSSREVKPLCRTIPTLGRCRRGKTVTPSISMCWTATVLDDGVQRRIANHHSNLWHDSFIQSLSTPYGETSYLERADKLIGEVKEIINSISVEDGELITPLNDLIQRLSIVDNIERLGIDRHFKNEIKSVLDYVYSYWNEKGIGCGRESVITDLNSTALGLRTLRLHGYPVSSDVLEQFKDQNGQFACSAIQTEGEIKSVLNLFRASLIAFPGEKVMEDAEIFSTIYLKEALLTIPVCSLSREIAYVLEHGWHTNLPRLEARNYIDVFGQDPIYGTPNIKMTQKLLEIAKLEFNIFHSLQQKELKHLSRWWKDSVFSQLTFPRHRHVEYYTLASCIDIDPQHSSFRLGFAKISHLGTVLDDIYDTFGTMDELELFTAALKRWHPSATKWLPEYMKGVYMMLYETVNEMAREADKSQGRDTLNYARQAWEAYIDSYMKEAKWISSGFLPTFEEYLDNGKVSFGYRIGTLQPILTLGTPFPHHILQEIDFPSSLNRLACSILRLKGDIHTYQAERSRGEKSSCISCYMKDNPGSTEEDAVTYINAMVNKSLKELNWEFLRPDSNAPITSKKHAFDILRAFYHLYKHRDGFSVARNEIRNLVKTTVIEPVPL.

Residues M1–S21 constitute a chloroplast transit peptide. D378, D382, and E530 together coordinate Mg(2+). Positions D378–D382 match the DDXXD motif motif.

The protein belongs to the terpene synthase family. Tpsd subfamily. Mg(2+) serves as cofactor. It depends on Mn(2+) as a cofactor.

Its subcellular location is the plastid. The protein resides in the chloroplast. It carries out the reaction (2E)-geranyl diphosphate + H2O = (R)-linalool + diphosphate. Its pathway is terpene metabolism; oleoresin biosynthesis. Its function is as follows. Terpene synthase (TPS) involved in the biosynthesis of monoterpene natural products included in conifer oleoresin secretions and volatile emissions; these compounds contribute to biotic and abiotic stress defense against herbivores and pathogens. Catalyzes the conversion of (2E)-geranyl diphosphate (GPP) to (R)-linalool. This is (R)-linalool synthase 1, chloroplastic from Picea sitchensis (Sitka spruce).